Here is a 389-residue protein sequence, read N- to C-terminus: Chalcone synthase J (389 aa).

C164 is a catalytic residue.

The protein belongs to the thiolase-like superfamily. Chalcone/stilbene synthases family.

The catalysed reaction is (E)-4-coumaroyl-CoA + 3 malonyl-CoA + 3 H(+) = 2',4,4',6'-tetrahydroxychalcone + 3 CO2 + 4 CoA. It functions in the pathway secondary metabolite biosynthesis; flavonoid biosynthesis. In terms of biological role, the primary product of this enzyme is 4,2',4',6'-tetrahydroxychalcone (also termed naringenin-chalcone or chalcone) which can under specific conditions spontaneously isomerize into naringenin. The protein is Chalcone synthase J (CHSJ) of Petunia hybrida (Petunia).